Here is a 525-residue protein sequence, read N- to C-terminus: Asparagine synthetase [glutamine-hydrolyzing] (525 aa).

Cys-2 serves as the catalytic For GATase activity. The Glutamine amidotransferase type-2 domain maps to 2–185 (CGILAVLGCS…PGHLYSSKEG (184 aa)). L-glutamine-binding positions include 50 to 54 (RLAII), 75 to 77 (NGE), and Asp-98. Residues 193–517 (PPWFSEVIPS…QIDSPWRSKC (325 aa)) form the Asparagine synthetase domain. Residues Leu-231, Val-267, and 341–342 (SG) contribute to the ATP site.

The catalysed reaction is L-aspartate + L-glutamine + ATP + H2O = L-asparagine + L-glutamate + AMP + diphosphate + H(+). It functions in the pathway amino-acid biosynthesis; L-asparagine biosynthesis; L-asparagine from L-aspartate (L-Gln route): step 1/1. Functionally, could play a role in remobilization of nitrogen in flowers during senescence. The sequence is that of Asparagine synthetase [glutamine-hydrolyzing] (AND1) from Sandersonia aurantiaca (Christmas-bells).